The sequence spans 138 residues: Dehydratase iacD (138 aa).

The EthD domain maps to 18-113 (GVSEEDFIEW…LKDQDVWMDN (96 aa)).

Belongs to the tpcK family.

It participates in secondary metabolite biosynthesis. Functionally, dehydratase; part of the gene cluster that mediates the biosynthesis of iso-A82775C, a enylepoxycyclohexane and biosynthetic precursor of the chloropestolide anticancer natural products. Within the cluster, the prenyltransferase iacE prenylates siccayne to generate pestalodiol E, using dimethylallyl diphosphate (DMAPP) as cosubstrate. The probable oxidoreductase iacF is then involved in the epoxidation of pestalodiol F to pestalodiol F, which is further converted to pestalofone A by the short-chain dehydrogenase/reductase iacG. Iso-A82775C is subsequently generated from pestalofone A by the short-chain dehydrogenase/reductase iacC. Iso-A82775C is further condensed with maldoxin via a Diels-Alder reaction to produce the anticancer natural products chloropestolides A to E. The chain is Dehydratase iacD from Pestalotiopsis fici (strain W106-1 / CGMCC3.15140).